We begin with the raw amino-acid sequence, 251 residues long: MNLNSIPAFDDNYIWVLNDEAGRCLIVDPGDAEPVLNAIAANNWQPEAIFLTHHHHDHVGGVKELVKKFPQIVVYGPQETQDKGTTQVVKDSETAFVLGHEFSVIATPGHTLGHICYFSKPYLFCGDTLFSGGCGRLFEGTPSQMYQSIKKLSALPDDTLVCCAHEYTLSNMKFALSILPHDLSINDYYRKVKELRAKNQITLPVILKNERQINVFLRTEDIDLINVINEETLLQQPEERFAWLRSKKDRF.

Residues H53, H55, D57, H58, H110, D127, and H165 each contribute to the Zn(2+) site.

The protein belongs to the metallo-beta-lactamase superfamily. Glyoxalase II family. In terms of assembly, monomer. Requires Zn(2+) as cofactor.

The catalysed reaction is an S-(2-hydroxyacyl)glutathione + H2O = a 2-hydroxy carboxylate + glutathione + H(+). The protein operates within secondary metabolite metabolism; methylglyoxal degradation; (R)-lactate from methylglyoxal: step 2/2. Functionally, thiolesterase that catalyzes the hydrolysis of S-D-lactoyl-glutathione to form glutathione and D-lactic acid. This Escherichia coli O6:H1 (strain CFT073 / ATCC 700928 / UPEC) protein is Hydroxyacylglutathione hydrolase.